A 294-amino-acid chain; its full sequence is 4-hydroxy-tetrahydrodipicolinate synthase (294 aa).

T45 contacts pyruvate. Y133 acts as the Proton donor/acceptor in catalysis. Catalysis depends on K161, which acts as the Schiff-base intermediate with substrate. Residue I203 coordinates pyruvate.

It belongs to the DapA family. In terms of assembly, homotetramer; dimer of dimers.

The protein resides in the cytoplasm. The enzyme catalyses L-aspartate 4-semialdehyde + pyruvate = (2S,4S)-4-hydroxy-2,3,4,5-tetrahydrodipicolinate + H2O + H(+). It functions in the pathway amino-acid biosynthesis; L-lysine biosynthesis via DAP pathway; (S)-tetrahydrodipicolinate from L-aspartate: step 3/4. Functionally, catalyzes the condensation of (S)-aspartate-beta-semialdehyde [(S)-ASA] and pyruvate to 4-hydroxy-tetrahydrodipicolinate (HTPA). This chain is 4-hydroxy-tetrahydrodipicolinate synthase, found in Shewanella sp. (strain ANA-3).